A 769-amino-acid polypeptide reads, in one-letter code: Polymeric immunoglobulin receptor (769 aa).

The first 18 residues, 1-18, serve as a signal peptide directing secretion; sequence MRLSLFALLVTVFSGVST. At 19-643 the chain is on the extracellular side; the sequence is QSPIFGPQDV…SAGGQSGSSK (625 aa). One can recognise an Ig-like V-type 1; required for binding to polymeric IgA and IgM domain in the interval 21–126; it reads PIFGPQDVSS…RGLFFDVSLE (106 aa). Cysteines 40 and 110 form a disulfide. N-linked (GlcNAc...) asparagine glycosylation is found at Asn-90, Asn-135, and Asn-206. Ig-like V-type domains follow at residues 135–237, 240–341, 353–457, and 463–563; these read NDTH…DLQV, PEPE…VQAW, NSRS…LQVA, and PDLE…IYVA. Cystine bridges form between Cys-152/Cys-220, Cys-257/Cys-324, and Cys-370/Cys-440. Residue Asn-471 is glycosylated (N-linked (GlcNAc...) asparagine). A disulfide bridge connects residues Cys-484 and Cys-546. 2 disordered regions span residues 569–604 and 619–640; these read RGSPHINPTDANARAKDAPEEEAMESSVREDENKAN and AGDQAQENRASGNAGSAGGQSG. Basic and acidic residues predominate over residues 595-604; the sequence is SVREDENKAN. Residues 644 to 666 traverse the membrane as a helical segment; that stretch reads VLFSTLVPLGLVLAVGAVAVWVA. At 667–769 the chain is on the cytoplasmic side; it reads RVRHRKNVDR…AQVHDGPQEA (103 aa). 4 positions are modified to phosphoserine: Ser-678, Ser-687, Ser-694, and Ser-740. Positions 719–741 are disordered; it reads EIETTTECTTEPEESKKAKRSSK. A compositionally biased stretch (basic and acidic residues) spans 731 to 741; sequence EESKKAKRSSK.

As to quaternary structure, interacts (mainly via CDR1-like domain) with dimeric IgA. Interacts (mainly via CDR2-like domain) with pentameric IgM. Either free or part of the secretory IgA (sIgA) complex that consists of two, four or five IgA monomers, and two additional non-Ig polypeptides, namely the JCHAIN and the secretory component (the proteolytic product of PIGR). Free secretory component interacts with bacterial antigens toxA of C.difficile and eae of E.coli. In terms of processing, N-glycosylated. N-glycosylation is required for anchoring IgA molecules to mucus, but is not necessary for Ig binding.

It localises to the cell membrane. The protein resides in the secreted. In terms of biological role, mediates selective transcytosis of polymeric IgA and IgM across mucosal epithelial cells. Binds polymeric IgA and IgM at the basolateral surface of epithelial cells. The complex is then transported across the cell to be secreted at the apical surface. During this process, a cleavage occurs that separates the extracellular (known as the secretory component) from the transmembrane segment. Its function is as follows. Through its N-linked glycans ensures anchoring of secretory IgA (sIgA) molecules to mucus lining the epithelial surface to neutralize extracellular pathogens. On its own (free form) may act as a non-specific microbial scavenger to prevent pathogen interaction with epithelial cells. This Rattus norvegicus (Rat) protein is Polymeric immunoglobulin receptor (Pigr).